A 323-amino-acid chain; its full sequence is Calcium homeostasis modulator protein 2 (323 aa).

Over 1-21 (MAALIAENFRFLSLFFKSKDV) the chain is Cytoplasmic. The segment at 14-39 (LFFKSKDVMIFNGLVALGTVGSQELF) is central pore. A helical membrane pass occupies residues 22–43 (MIFNGLVALGTVGSQELFSVVA). At 44-52 (FHCPCSPAR) the chain is on the extracellular side. Cystine bridges form between C46–C130 and C48–C162. The helical transmembrane segment at 53–76 (NYLYGLTAIGVPALALFLIGVILN) threads the bilayer. The Cytoplasmic segment spans residues 77–101 (NHTWNLVAECQYRRAKNCSAAPNFL). The chain crosses the membrane as a helical span at residues 102 to 132 (LLSSILGRAAVAPVTWSVISLLRGEAYVCAL). Residues 133-179 (SEFVDPSSLTAGDKGFPPAHATEVLARFPCGEGPANLSSFREEVSRR) lie on the Extracellular side of the membrane. The interval 145-152 (DKGFPPAH) is hemichannel docking. The chain crosses the membrane as a helical span at residues 180-206 (LKYESQLFGWLLIGVVAILVFLTKCLK). Over 207 to 323 (HYCSPLSYRQ…DNVEMALLTA (117 aa)) the chain is Cytoplasmic. The interval 214–251 (YRQEAYWAQYRTNEDQLFQRTAEVHSRVLAANNVRRFF) is intersubunit interaction.

This sequence belongs to the CALHM family. In terms of assembly, homo-undecamer. Two undecameric hemichannels can assemble in a head-to-head manner to form a gap junction. Neuron, astrocyte, and microglia.

The protein resides in the cell membrane. The catalysed reaction is ATP(in) = ATP(out). Inhibited by divalent cations such as Co(2+) and Ni(2+). Pore-forming subunit of Ca(2+) homeostasis modulator channels. Mediates ATP release from astrocytes and ATP-induced Ca(2+) influx in microglia thus regulating neuronal ATP and Ca(2+) homeostasis, synaptic transmission and neuroinflammatory response. May form intercellular gap junctions. The gating mechanism remains unknown. This Mus musculus (Mouse) protein is Calcium homeostasis modulator protein 2.